A 121-amino-acid polypeptide reads, in one-letter code: Fluoride-specific ion channel FluC 2 (121 aa).

The next 4 helical transmembrane spans lie at 3–23, 31–51, 64–84, and 92–112; these read YLFI…LSFI, IGTF…GTLA, GITT…FELV, and FILL…LCFL. Na(+) contacts are provided by glycine 71 and threonine 74.

This sequence belongs to the fluoride channel Fluc/FEX (TC 1.A.43) family.

It is found in the cell membrane. The enzyme catalyses fluoride(in) = fluoride(out). Its activity is regulated as follows. Na(+) is not transported, but it plays an essential structural role and its presence is essential for fluoride channel function. Its function is as follows. Fluoride-specific ion channel. Important for reducing fluoride concentration in the cell, thus reducing its toxicity. This Staphylococcus saprophyticus subsp. saprophyticus (strain ATCC 15305 / DSM 20229 / NCIMB 8711 / NCTC 7292 / S-41) protein is Fluoride-specific ion channel FluC 2.